Here is a 362-residue protein sequence, read N- to C-terminus: uncharacterized protein (362 aa).

Transmembrane regions (helical) follow at residues G32 to V52, F75 to V95, V106 to V126, A148 to A168, G176 to V196, V287 to M307, and V329 to F349.

Belongs to the peptidase S58 family.

The protein localises to the cell membrane. Aminopeptidase. This is an uncharacterized protein from Mycobacterium leprae (strain TN).